A 339-amino-acid polypeptide reads, in one-letter code: Ketol-acid reductoisomerase (NADP(+)) (339 aa).

The KARI N-terminal Rossmann domain occupies 1-182 (MRVYYDRDAD…GGGRSGIIET (182 aa)). Residues 24–27 (YGSQ), R48, S51, S53, and 83–86 (DELQ) contribute to the NADP(+) site. The active site involves H108. G134 serves as a coordination point for NADP(+). A KARI C-terminal knotted domain is found at 183–328 (TFREECETDL…EKLRGMMPWI (146 aa)). Positions 191, 195, 227, and 231 each coordinate Mg(2+). S252 contributes to the substrate binding site.

It belongs to the ketol-acid reductoisomerase family. Mg(2+) serves as cofactor.

It catalyses the reaction (2R)-2,3-dihydroxy-3-methylbutanoate + NADP(+) = (2S)-2-acetolactate + NADPH + H(+). It carries out the reaction (2R,3R)-2,3-dihydroxy-3-methylpentanoate + NADP(+) = (S)-2-ethyl-2-hydroxy-3-oxobutanoate + NADPH + H(+). Its pathway is amino-acid biosynthesis; L-isoleucine biosynthesis; L-isoleucine from 2-oxobutanoate: step 2/4. It functions in the pathway amino-acid biosynthesis; L-valine biosynthesis; L-valine from pyruvate: step 2/4. Involved in the biosynthesis of branched-chain amino acids (BCAA). Catalyzes an alkyl-migration followed by a ketol-acid reduction of (S)-2-acetolactate (S2AL) to yield (R)-2,3-dihydroxy-isovalerate. In the isomerase reaction, S2AL is rearranged via a Mg-dependent methyl migration to produce 3-hydroxy-3-methyl-2-ketobutyrate (HMKB). In the reductase reaction, this 2-ketoacid undergoes a metal-dependent reduction by NADPH to yield (R)-2,3-dihydroxy-isovalerate. In Magnetospirillum molischianum (Rhodospirillum molischianum), this protein is Ketol-acid reductoisomerase (NADP(+)).